A 538-amino-acid polypeptide reads, in one-letter code: [Pyruvate dehydrogenase [acetyl-transferring]]-phosphatase 1, mitochondrial (538 aa).

The N-terminal 71 residues, 1-71, are a transit peptide targeting the mitochondrion; the sequence is MPAPTQLFFP…WWQYTQGRRY (71 aa). A PPM-type phosphatase domain is found at 109-525; it reads VLGFDSNQLP…DDITIIVVQF (417 aa). The Mn(2+) site is built by Asp-144 and Gly-145. The residue at position 202 (Lys-202) is an N6-acetyllysine. Residues Asp-418 and Asp-516 each coordinate Mn(2+).

Belongs to the PP2C family. In terms of assembly, heterodimer of a catalytic (PDP1) and a regulatory (PDPR) subunit. Requires Mn(2+) as cofactor. It depends on Mg(2+) as a cofactor.

The protein resides in the mitochondrion. It catalyses the reaction O-phospho-L-seryl-[pyruvate dehydrogenase E1 alpha subunit] + H2O = L-seryl-[pyruvate dehydrogenase E1 alpha subunit] + phosphate. With respect to regulation, magnesium-dependent and calcium-stimulated. PDP1 activity strongly depends on its Ca(2+)-dependent binding to the lipoyl domain of E2 subunit of component of the pyruvate dehydrogenase complex. Mitochondrial enzyme that catalyzes the dephosphorylation and concomitant reactivation of the alpha subunit of the E1 component of the pyruvate dehydrogenase complex (PDC), thereby stimulating the conversion of pyruvate into acetyl-CoA. The sequence is that of [Pyruvate dehydrogenase [acetyl-transferring]]-phosphatase 1, mitochondrial (PDP1) from Bos taurus (Bovine).